The primary structure comprises 139 residues: ATP synthase epsilon chain (139 aa).

Belongs to the ATPase epsilon chain family. In terms of assembly, F-type ATPases have 2 components, CF(1) - the catalytic core - and CF(0) - the membrane proton channel. CF(1) has five subunits: alpha(3), beta(3), gamma(1), delta(1), epsilon(1). CF(0) has three main subunits: a, b and c.

It localises to the cell inner membrane. Its function is as follows. Produces ATP from ADP in the presence of a proton gradient across the membrane. This is ATP synthase epsilon chain from Escherichia coli O139:H28 (strain E24377A / ETEC).